The sequence spans 95 residues: Aspartyl/glutamyl-tRNA(Asn/Gln) amidotransferase subunit C (95 aa).

The protein belongs to the GatC family. As to quaternary structure, heterotrimer of A, B and C subunits.

The enzyme catalyses L-glutamyl-tRNA(Gln) + L-glutamine + ATP + H2O = L-glutaminyl-tRNA(Gln) + L-glutamate + ADP + phosphate + H(+). It catalyses the reaction L-aspartyl-tRNA(Asn) + L-glutamine + ATP + H2O = L-asparaginyl-tRNA(Asn) + L-glutamate + ADP + phosphate + 2 H(+). Allows the formation of correctly charged Asn-tRNA(Asn) or Gln-tRNA(Gln) through the transamidation of misacylated Asp-tRNA(Asn) or Glu-tRNA(Gln) in organisms which lack either or both of asparaginyl-tRNA or glutaminyl-tRNA synthetases. The reaction takes place in the presence of glutamine and ATP through an activated phospho-Asp-tRNA(Asn) or phospho-Glu-tRNA(Gln). The polypeptide is Aspartyl/glutamyl-tRNA(Asn/Gln) amidotransferase subunit C (Gluconacetobacter diazotrophicus (strain ATCC 49037 / DSM 5601 / CCUG 37298 / CIP 103539 / LMG 7603 / PAl5)).